The sequence spans 629 residues: tRNA uridine 5-carboxymethylaminomethyl modification enzyme MnmG (629 aa).

FAD contacts are provided by residues 13–18, valine 125, and serine 180; that span reads GGGHAG. 273 to 287 contacts NAD(+); sequence GPRYCPSIEDKVMRF. An FAD-binding site is contributed by glutamine 370.

The protein belongs to the MnmG family. In terms of assembly, homodimer. Heterotetramer of two MnmE and two MnmG subunits. FAD serves as cofactor.

The protein localises to the cytoplasm. In terms of biological role, NAD-binding protein involved in the addition of a carboxymethylaminomethyl (cmnm) group at the wobble position (U34) of certain tRNAs, forming tRNA-cmnm(5)s(2)U34. This chain is tRNA uridine 5-carboxymethylaminomethyl modification enzyme MnmG, found in Escherichia coli O157:H7.